We begin with the raw amino-acid sequence, 503 residues long: ATP synthase subunit beta (503 aa).

157-164 serves as a coordination point for ATP; that stretch reads GGAGVGKT.

This sequence belongs to the ATPase alpha/beta chains family. As to quaternary structure, F-type ATPases have 2 components, CF(1) - the catalytic core - and CF(0) - the membrane proton channel. CF(1) has five subunits: alpha(3), beta(3), gamma(1), delta(1), epsilon(1). CF(0) has three main subunits: a(1), b(2) and c(9-12). The alpha and beta chains form an alternating ring which encloses part of the gamma chain. CF(1) is attached to CF(0) by a central stalk formed by the gamma and epsilon chains, while a peripheral stalk is formed by the delta and b chains.

The protein localises to the cell inner membrane. It carries out the reaction ATP + H2O + 4 H(+)(in) = ADP + phosphate + 5 H(+)(out). Its function is as follows. Produces ATP from ADP in the presence of a proton gradient across the membrane. The catalytic sites are hosted primarily by the beta subunits. This chain is ATP synthase subunit beta, found in Flavobacterium johnsoniae (strain ATCC 17061 / DSM 2064 / JCM 8514 / BCRC 14874 / CCUG 350202 / NBRC 14942 / NCIMB 11054 / UW101) (Cytophaga johnsonae).